The sequence spans 133 residues: Small ribosomal subunit protein uS11 (133 aa).

It belongs to the universal ribosomal protein uS11 family. As to quaternary structure, part of the 30S ribosomal subunit. Interacts with proteins S7 and S18. Binds to IF-3.

In terms of biological role, located on the platform of the 30S subunit, it bridges several disparate RNA helices of the 16S rRNA. Forms part of the Shine-Dalgarno cleft in the 70S ribosome. In Ralstonia nicotianae (strain ATCC BAA-1114 / GMI1000) (Ralstonia solanacearum), this protein is Small ribosomal subunit protein uS11.